The primary structure comprises 507 residues: MEELQGYLEMDGFRQQYFLYPFLFQEYIYALAHGHALNGSILYEPVENLDHDNKSSSLIVKRLITRMHQQNRLIISVNDSNQNRFVGHNNHFDSQMISEGFAVVVEIPFSLRLVSSLEEKEIAKSHNLRSIHSIFPFFEDKLSHLNHVSDILIPHPIHLEILVQTLHSWIQDTPSLHLLRLSLYEYWNSNSLITSKNSISLFSKENQRFFLFLSNSHVYECEFIFIFLRKQPFHLRSKSFGSFLERTHFYAKIEYLVVVLCNDFQKTLGLFKDPFMHYVRYQGKSILASRGAHLLIKKWKSHLVNFWQCHFDLWSQPARIHIKQLYNHPFYFLGYLSSVRLNSSVIRSQMLENSFRIDTAIKKFETVVPIIPLIGSLAKAKFCNVSGHPISKPFRADLSDSEILNRFGRICRNLSHYHSGSSKKQSLYRIKYILRLSCARTLSRKHKSTIRAFLKRLGSEFLEEFFTEEEQALSLIFPTTSSPSHRSHRERIWYLDIIRINDLVSHL.

This sequence belongs to the intron maturase 2 family. MatK subfamily.

It is found in the plastid. The protein localises to the chloroplast. Its function is as follows. Usually encoded in the trnK tRNA gene intron. Probably assists in splicing its own and other chloroplast group II introns. The polypeptide is Maturase K (Persea americana (Avocado)).